The chain runs to 749 residues: Phosphate-regulating neutral endopeptidase PHEX (749 aa).

Over 1–20 the chain is Cytoplasmic; that stretch reads MEAETGSSVETGKKANRGTR. Residues 21-41 traverse the membrane as a helical; Signal-anchor for type II membrane protein segment; it reads IALVVFVGGTLVLGTILFLVS. Residues 42 to 641 lie on the Extracellular side of the membrane; the sequence is QGLLSLQAKQ…LNVKGKRTLG (600 aa). The Peptidase M13 domain occupies 53–749; that stretch reads YCLKPECIEA…NRGMDSCRLW (697 aa). A disulfide bridge links C54 with C59. Residues N71, N238, N263, N290, N301, N377, and N484 are each glycosylated (N-linked (GlcNAc...) asparagine). Disulfide bonds link C77–C733, C85–C693, C142–C406, and C617–C746. Zn(2+) is bound at residue H580. Residue E581 is part of the active site. Residues H584 and E642 each coordinate Zn(2+). The Proton donor role is filled by D646. N-linked (GlcNAc...) asparagine glycosylation is present at N736.

Belongs to the peptidase M13 family. As to quaternary structure, interacts with MEPE; the interaction is zinc-dependent (via ASARM motif). Requires Zn(2+) as cofactor. As to expression, specifically expressed in ovary. Expressed at low levels in kidney.

The protein resides in the cell membrane. Peptidase that cleaves SIBLING (small integrin-binding ligand, N-linked glycoprotein)-derived ASARM peptides, thus regulating their biological activity. Cleaves ASARM peptides between Ser and Glu or Asp residues. Regulates osteogenic cell differentiation and bone mineralization through the cleavage of the MEPE-derived ASARM peptide. Promotes dentin mineralization and renal phosphate reabsorption by cleaving DMP1- and MEPE-derived ASARM peptides. Inhibits the cleavage of MEPE by CTSB/cathepsin B thus preventing MEPE degradation. The sequence is that of Phosphate-regulating neutral endopeptidase PHEX (PHEX) from Homo sapiens (Human).